Here is a 262-residue protein sequence, read N- to C-terminus: Probable cutinase 1 (262 aa).

The first 19 residues, 1–19 (MAPLKSLLLGASLATLALS), serve as a signal peptide directing secretion. 2 cysteine pairs are disulfide-bonded: Cys-48-Cys-127 and Cys-74-Cys-88. Ser-138 functions as the Nucleophile in the catalytic mechanism. A disulfide bridge links Cys-189 with Cys-196. Residue Asp-193 is part of the active site. The Proton donor/acceptor role is filled by His-206. Residues 228–262 (SSSTTSSSSDAASSSSAAGTSSSGLSGLSSFFGGL) are disordered.

The protein belongs to the cutinase family.

Its subcellular location is the secreted. It carries out the reaction cutin + H2O = cutin monomers.. Its function is as follows. Catalyzes the hydrolysis of complex carboxylic polyesters found in the cell wall of plants. Degrades cutin, a macromolecule that forms the structure of the plant cuticle. This is Probable cutinase 1 from Aspergillus niger (strain ATCC MYA-4892 / CBS 513.88 / FGSC A1513).